The primary structure comprises 88 residues: DNA-directed RNA polymerase subunit omega (88 aa).

This sequence belongs to the RNA polymerase subunit omega family. In terms of assembly, the RNAP catalytic core consists of 2 alpha, 1 beta, 1 beta' and 1 omega subunit. When a sigma factor is associated with the core the holoenzyme is formed, which can initiate transcription.

It carries out the reaction RNA(n) + a ribonucleoside 5'-triphosphate = RNA(n+1) + diphosphate. Its function is as follows. Promotes RNA polymerase assembly. Latches the N- and C-terminal regions of the beta' subunit thereby facilitating its interaction with the beta and alpha subunits. The protein is DNA-directed RNA polymerase subunit omega of Kineococcus radiotolerans (strain ATCC BAA-149 / DSM 14245 / SRS30216).